A 1351-amino-acid polypeptide reads, in one-letter code: D-lysergyl-peptide-synthetase subunit 2 (1351 aa).

The segment at R285–R684 is adenylation (A) domain. Residues A828–K904 enclose the Carrier domain. S865 carries the post-translational modification O-(pantetheine 4'-phosphoryl)serine. The interval E941–Q1340 is condensation (C) domain.

This sequence belongs to the NRP synthetase family.

It functions in the pathway alkaloid biosynthesis; ergot alkaloid biosynthesis. Its function is as follows. D-lysergyl-peptide-synthetase subunit 2; part of the gene cluster that mediates the biosynthesis of fungal ergot alkaloid ergovaline, the predominant ergopeptine product in E.festucae var. lolii. DmaW catalyzes the first step of ergot alkaloid biosynthesis by condensing dimethylallyl diphosphate (DMAP) and tryptophan to form 4-dimethylallyl-L-tryptophan. The second step is catalyzed by the methyltransferase easF that methylates 4-dimethylallyl-L-tryptophan in the presence of S-adenosyl-L-methionine, resulting in the formation of 4-dimethylallyl-L-abrine. The catalase easC and the FAD-dependent oxidoreductase easE then transform 4-dimethylallyl-L-abrine to chanoclavine-I which is further oxidized by easD in the presence of NAD(+), resulting in the formation of chanoclavine-I aldehyde. Agroclavine dehydrogenase easG then mediates the conversion of chanoclavine-I aldehyde to agroclavine via a non-enzymatic adduct reaction: the substrate is an iminium intermediate that is formed spontaneously from chanoclavine-I aldehyde in the presence of glutathione. The presence of easA is not required to complete this reaction. Further conversion of agroclavine to paspalic acid is a two-step process involving oxidation of agroclavine to elymoclavine and of elymoclavine to paspalic acid, the second step being performed by the elymoclavine oxidase cloA. Paspalic acid is then further converted to D-lysergic acid. Ergovaline is assembled from D-lysergic acid and three different amino acids by the D-lysergyl-peptide-synthetase composed of a monomudular (lpsB) and a trimodular (lpsA) nonribosomal peptide synthetase subunit. The protein is D-lysergyl-peptide-synthetase subunit 2 of Epichloe festucae var. lolii (Neotyphodium lolii).